The chain runs to 356 residues: tRNA N6-adenosine threonylcarbamoyltransferase (356 aa).

Fe cation is bound by residues His-115 and His-119. Substrate contacts are provided by residues 138–142, Asp-171, Gly-184, and Asn-283; that span reads LVSGG. Asp-311 is a Fe cation binding site.

This sequence belongs to the KAE1 / TsaD family. Fe(2+) serves as cofactor.

Its subcellular location is the cytoplasm. It carries out the reaction L-threonylcarbamoyladenylate + adenosine(37) in tRNA = N(6)-L-threonylcarbamoyladenosine(37) in tRNA + AMP + H(+). In terms of biological role, required for the formation of a threonylcarbamoyl group on adenosine at position 37 (t(6)A37) in tRNAs that read codons beginning with adenine. Is involved in the transfer of the threonylcarbamoyl moiety of threonylcarbamoyl-AMP (TC-AMP) to the N6 group of A37, together with TsaE and TsaB. TsaD likely plays a direct catalytic role in this reaction. The sequence is that of tRNA N6-adenosine threonylcarbamoyltransferase from Prochlorococcus marinus (strain MIT 9215).